A 99-amino-acid chain; its full sequence is Small ribosomal subunit protein bS6 (99 aa).

It belongs to the bacterial ribosomal protein bS6 family.

Its function is as follows. Binds together with bS18 to 16S ribosomal RNA. In Lactiplantibacillus plantarum (strain ATCC BAA-793 / NCIMB 8826 / WCFS1) (Lactobacillus plantarum), this protein is Small ribosomal subunit protein bS6.